The following is a 124-amino-acid chain: TP53-target gene 3 protein (124 aa).

Positions 1 to 11 (MRASPCISQPA) are enriched in polar residues. The disordered stretch occupies residues 1–42 (MRASPCISQPAASWHPRPSALRPTAGSGPDTRTPGTVEDGSA).

As to expression, strongly expressed in testis. Weakly expressed in heart, placenta and skeletal muscle.

The protein resides in the cytoplasm. The protein localises to the nucleus. Its function is as follows. May play a significant role in p53/TP53-mediating signaling pathway. This chain is TP53-target gene 3 protein, found in Homo sapiens (Human).